We begin with the raw amino-acid sequence, 625 residues long: MSLSEQYEEKVRPCIDLIDSLRALGVEKDLALPAIAVIGDQSSGKSSVLEALSGVALPRGSGIVTRCPLELKMKKSRKADFWHGKIKYEDYEEEIEDPADVEQMIRKAQNEIAGTGMGISDKLISLEVTSSNVPDLTVIDLPGITRVAVKDQPENIGDQSKRLIKKFITKQETINLVVVPCNVDIATTEALKMALEVDPNGERTFGVLTKPDLVDKGSEETVVSIINNEIVYLNKGYIIVRCRGQQEIKDRVSLNETVKRERDFFEDHPHFRTLYDNRKATIPNLAEKLTLELVFHIGRCLPRLEERIQVKLSETQAELDRYGSGTPTEPEQRIYFLTDKITAFIQDVLNLTTGEEVKSMLYMNIFPDLRKQFDLWKNDLDSVGETFNKKIEKEMKAYEEKYRGRELPGFLKYNTFEVIVKGQIKQLEEPAIRRLKEISDLIKREFSQLAHSNFPGFPNILKMAKTKIDNIKQVKESETESILRTQFKMEMMIYTQDKTHHDNLKMLKSKEEGKERQKLGVAHSPSHKLYDHSDSEGIREELTCHLKSYFSIVTKRLADQVPMVIRYMMLQESAAQLQREMIQLIQDRHNIEELLKEDHDIASKRNNLHSCQKRLTEALKYLAKF.

The Dynamin-type G domain maps to 29 to 302 (DLALPAIAVI…LVFHIGRCLP (274 aa)). Positions 39–46 (GDQSSGKS) are G1 motif. 39–46 (GDQSSGKS) is a GTP binding site. The interval 64 to 66 (VTR) is G2 motif. The segment at 140-143 (DLPG) is G3 motif. GTP contacts are provided by residues 140-144 (DLPGI) and 209-212 (TKPD). The interval 209–212 (TKPD) is G4 motif. Positions 241 to 244 (RCRG) are G5 motif. Positions 539 to 625 (REELTCHLKS…TEALKYLAKF (87 aa)) constitute a GED domain.

It belongs to the TRAFAC class dynamin-like GTPase superfamily. Dynamin/Fzo/YdjA family.

Its subcellular location is the cytoplasm. In Ictalurus punctatus (Channel catfish), this protein is Interferon-induced GTP-binding protein Mx2 (mx2).